The chain runs to 826 residues: G-protein coupled receptor-associated sorting protein 2 (826 aa).

4 disordered regions span residues 1 to 126 (MTGA…AQAW), 204 to 286 (WCYP…NPFC), 336 to 371 (EGNRFRRRDKEEPNKTLKNENEKDVKNDETVEQESR), and 506 to 534 (IPEGASGNSEEKAKNAELGAEGEEQDSVA). Basic and acidic residues predominate over residues 13–31 (KPDKKPQEEVAGGAERESE). The segment covering 59 to 73 (SSRARPKTETQSVSG) has biased composition (polar residues). Residues 231-247 (TREETSIRSWPREEVNT) are compositionally biased toward basic and acidic residues. Basic residues predominate over residues 248–264 (RSRHRAKHQTNARSKPR). A phosphoserine mark is found at Ser-275 and Ser-277.

The protein belongs to the GPRASP family. In terms of assembly, interacts with cytoplasmic tails of a variety of G-protein coupled receptors such as muscarinic acetylcholine receptor M1/CHRM1 and calcitonin receptor/CALCR. Strongly expressed in the brain and the cochlea. Also in lung and muscle tissues. Localized in multiple structures of the cochlea, detected in the spiral ganglion, stria vascularis, spiral ligament, inner and outer hair cells.

Its function is as follows. May play a role in regulation of a variety of G-protein coupled receptors. The chain is G-protein coupled receptor-associated sorting protein 2 (Gprasp2) from Mus musculus (Mouse).